We begin with the raw amino-acid sequence, 330 residues long: 6-methylsalicylic acid decarboxylase acuB (330 aa).

Positions 6, 8, 156, and 276 each coordinate Zn(2+).

This sequence belongs to the metallo-dependent hydrolases superfamily. ACMSD family. In terms of assembly, monomer.

It localises to the cytoplasm. Its subcellular location is the cytosol. It catalyses the reaction 6-methylsalicylate + H(+) = 3-methylphenol + CO2. It participates in secondary metabolite biosynthesis. Its function is as follows. 6-methylsalicylic acid decarboxylase; part of the gene cluster that mediates the biosynthesis of aculins. The pathway begins with the synthesis of 6-methylsalicylic acid by the polyketide synthase (PKS) acuA via condensation of acetate and malonate units. The 6-methylsalicylic acid decarboxylase acuB then catalyzes the decarboxylation of 6-methylsalicylic acid to yield m-cresol (also known as 3-methylphenol). These first reactions occur in the cytosol. The intermediate m-cresol is then transported into the endoplasmic reticulum where the cytochrome P450 monooxygenase acuC converts it to m-hydroxybenzyl alcohol, which is further converted to gentisyl alcohol by the cytochrome P450 monooxygenase acuD. Gentisyl alcohol is further oxidized by the oxidoreductase acuE that probably catalyzes hydroxylation of the aromatic ring. The aromatic system might then be opened by oxidation through a Baeyer-Villiger type of oxidation, which could be catalyzed by acuF, with the carboxylic acid at C-1 subsequently reduced to an aldehyde by acuG. Subsequently, a hemiacetal is formed, before the dehydrogenase acuH would reduce the double bond between C-4 and C-6. Finally, keto-enol tautomerism results in formation of aculinic acid, which exists as two diastereomers (both R/S configurations at C-1) by non-enzymatic hemiacetal formation. The carboxypeptidase acuI could be involved in the linking of aculinic acid to an aculene A moiety produced by the aculene biosynthesis cluster and which leads to the production of aculin A. AcuI may also be involved in the attachment of proline to aculinic acid to form epi-aculins A and B. In Aspergillus aculeatus (strain ATCC 16872 / CBS 172.66 / WB 5094), this protein is 6-methylsalicylic acid decarboxylase acuB.